Consider the following 658-residue polypeptide: Threonine--tRNA ligase (658 aa).

Residues 1–61 enclose the TGS domain; it reads MSDVRVIIQR…RDGESVEPVE (61 aa). The segment at 259-554 is catalytic; that stretch reads DHRKLGNELD…LLEHYAGAFP (296 aa). Zn(2+) is bound by residues cysteine 353, histidine 404, and histidine 531.

The protein belongs to the class-II aminoacyl-tRNA synthetase family. As to quaternary structure, homodimer. Zn(2+) serves as cofactor.

It localises to the cytoplasm. It catalyses the reaction tRNA(Thr) + L-threonine + ATP = L-threonyl-tRNA(Thr) + AMP + diphosphate + H(+). In terms of biological role, catalyzes the attachment of threonine to tRNA(Thr) in a two-step reaction: L-threonine is first activated by ATP to form Thr-AMP and then transferred to the acceptor end of tRNA(Thr). Also edits incorrectly charged L-seryl-tRNA(Thr). In Streptomyces griseus subsp. griseus (strain JCM 4626 / CBS 651.72 / NBRC 13350 / KCC S-0626 / ISP 5235), this protein is Threonine--tRNA ligase.